Reading from the N-terminus, the 256-residue chain is Pyridoxine 5'-phosphate synthase (256 aa).

Asparagine 12 contributes to the 3-amino-2-oxopropyl phosphate binding site. Position 14 to 15 (14 to 15 (DH)) interacts with 1-deoxy-D-xylulose 5-phosphate. Arginine 23 is a 3-amino-2-oxopropyl phosphate binding site. Histidine 48 serves as the catalytic Proton acceptor. 1-deoxy-D-xylulose 5-phosphate is bound by residues arginine 50 and histidine 55. The active-site Proton acceptor is the glutamate 75. Residue threonine 105 coordinates 1-deoxy-D-xylulose 5-phosphate. Histidine 199 (proton donor) is an active-site residue. 3-amino-2-oxopropyl phosphate contacts are provided by residues glycine 200 and 221 to 222 (GY).

Belongs to the PNP synthase family. As to quaternary structure, homooctamer; tetramer of dimers.

The protein localises to the cytoplasm. The enzyme catalyses 3-amino-2-oxopropyl phosphate + 1-deoxy-D-xylulose 5-phosphate = pyridoxine 5'-phosphate + phosphate + 2 H2O + H(+). It functions in the pathway cofactor biosynthesis; pyridoxine 5'-phosphate biosynthesis; pyridoxine 5'-phosphate from D-erythrose 4-phosphate: step 5/5. In terms of biological role, catalyzes the complicated ring closure reaction between the two acyclic compounds 1-deoxy-D-xylulose-5-phosphate (DXP) and 3-amino-2-oxopropyl phosphate (1-amino-acetone-3-phosphate or AAP) to form pyridoxine 5'-phosphate (PNP) and inorganic phosphate. The chain is Pyridoxine 5'-phosphate synthase from Bradyrhizobium sp. (strain ORS 278).